The sequence spans 240 residues: RNA-binding protein pno1 (240 aa).

The span at 1-15 shows a compositional bias: basic and acidic residues; sequence MEAENIRADAFEPAK. The interval 1–61 is disordered; it reads MEAENIRADA…APPKAKRARS (61 aa). The KH domain maps to 164 to 213; it reads QSRAIGRLAGKGGRTKFTIENVTKTRIVLADSKIHILGSYQNIQLARRAV.

This sequence belongs to the PNO1 family.

It is found in the nucleus. The protein resides in the nucleolus. In Drosophila melanogaster (Fruit fly), this protein is RNA-binding protein pno1 (l(1)G0004).